A 217-amino-acid polypeptide reads, in one-letter code: Large ribosomal subunit protein uL3 (217 aa).

The tract at residues 131-155 is disordered; it reads FSSSRASHGNSRSHNVPGSIGMAQD. A compositionally biased stretch (low complexity) spans 132-145; the sequence is SSSRASHGNSRSHN. Glutamine 154 carries the N5-methylglutamine modification.

It belongs to the universal ribosomal protein uL3 family. In terms of assembly, part of the 50S ribosomal subunit. Forms a cluster with proteins L14 and L19. Methylated by PrmB.

Functionally, one of the primary rRNA binding proteins, it binds directly near the 3'-end of the 23S rRNA, where it nucleates assembly of the 50S subunit. In Nitrosomonas eutropha (strain DSM 101675 / C91 / Nm57), this protein is Large ribosomal subunit protein uL3.